The following is a 361-amino-acid chain: tRNA-specific 2-thiouridylase MnmA (361 aa).

ATP contacts are provided by residues 6–13 and leucine 32; that span reads AMSGGVDS. The Nucleophile role is filled by cysteine 101. Cysteine 101 and cysteine 194 form a disulfide bridge. Glycine 125 contacts ATP. An interaction with tRNA region spans residues 144–146; sequence KDQ. The active-site Cysteine persulfide intermediate is the cysteine 194.

It belongs to the MnmA/TRMU family.

It localises to the cytoplasm. The catalysed reaction is S-sulfanyl-L-cysteinyl-[protein] + uridine(34) in tRNA + AH2 + ATP = 2-thiouridine(34) in tRNA + L-cysteinyl-[protein] + A + AMP + diphosphate + H(+). In terms of biological role, catalyzes the 2-thiolation of uridine at the wobble position (U34) of tRNA, leading to the formation of s(2)U34. In Corynebacterium aurimucosum (strain ATCC 700975 / DSM 44827 / CIP 107346 / CN-1) (Corynebacterium nigricans), this protein is tRNA-specific 2-thiouridylase MnmA.